The following is a 797-amino-acid chain: MENQGTRTQQIRQVLLLFVLLGMSQAGSETWSFSVAEEMQSGSFVGNLAKDLGLKVRELSSRGARVVSNDKKQRLQLDINTGDLLLSETLDREELCGSIEPCVLHLQVLMQNPTQFLQIELQVRDINDHSPIFSEKQMLLEIPENSPVGAVFLLESAKDLDVGINAVKSYTISPNSHFHIKMRVIPDNRKYPELVLDKALDYEELPELSFILSALDGGSPPRSGTALVRVVVVDINDNSPEFEQAFYEVKIRENSILGSLILIVSAWDLDSGTNGEICYTFSHASEDIRKTFEINQKSGEITLRAPLDFETIESYSIIIQATDGGGLFGKSTVIIHVIDVNDNAPEITVSSITSPIPENTPETVVMVFSIQDIDSGDNGRIVCSIPEDLPFVLKSSVENYYTLETERPLDRESTAEYNITITVTDLGIPRLKTEHNTTVLVSDVNDNAPTFTQTSYTLFVRENNSPALHIGSVSATDRDSGTNAQVNYSLLPPQDLHLPLASLVSINTDNGHLFALRSLDYEALQAFDFRVGATDRGSPALSSEALVRVLVLDANDNSPFVLYPLQNGSAPCTELVPRAAEPGYLVTKVVAVDGDSGQNAWLSYQLLKATEPGLFGVWAHNGEVRTARLLSERDAAKHRLVVLVKDNGEPPRSATATLQVLLVDGFSQPYLPLPEAAPAQAQADSLTVYLVVALASVSSLFLFSVLLFVAVRLCRRSRAASVGSCSVPKGPFPGHLVDVSGTGTLSQSYQYEVCLTGGSETNEFKFLKPVIPNIQAKGLGKNSEENSTFRNSFGFNF.

The first 26 residues, 1–26 (MENQGTRTQQIRQVLLLFVLLGMSQA), serve as a signal peptide directing secretion. Topologically, residues 27-690 (GSETWSFSVA…AQADSLTVYL (664 aa)) are extracellular. 5 Cadherin domains span residues 35–133 (VAEE…SPIF), 138–242 (MLLE…SPEF), 247–347 (YEVK…APEI), 352–451 (ITSP…APTF), and 456–561 (YTLF…SPFV). N-linked (GlcNAc...) asparagine glycosylation is found at N418, N436, N487, and N567. In terms of domain architecture, Cadherin 6 spans 568–671 (GSAPCTELVP…LVDGFSQPYL (104 aa)). The helical transmembrane segment at 691–711 (VVALASVSSLFLFSVLLFVAV) threads the bilayer. Residues 712–797 (RLCRRSRAAS…TFRNSFGFNF (86 aa)) are Cytoplasmic-facing.

The protein resides in the cell membrane. Functionally, potential calcium-dependent cell-adhesion protein. May be involved in the establishment and maintenance of specific neuronal connections in the brain. This is Protocadherin beta-11 (PCDHB11) from Homo sapiens (Human).